The primary structure comprises 315 residues: MYIPTYEDMLAAHERIKPHIRRTPIRTSDYLNELTGAQLFFKCENFQEPGAFKVRGATNAVFGLDDAQAAKGVATHSSGNHASCLSYAAMLRGIPCNVVMPRTAPQAKKDTVRRYGGVITECEPSTSSREETFAKVQAETGGDFVHPYNDPRVIAGQGTCAKELVEQVDGLDAVVAPIGGGGMISGTCLTLSTLAPETRVIAAEPEQADDAYRSFKAGYIIADDAPKTVADGLLVPLKDLTWHFVKNHVSEIYTASDAEIVDAMKLIWKHLRIVMEPSSAVPLATILKNPEAFAGKRVGVIVTGGNVDLDKLPWN.

An N6-(pyridoxal phosphate)lysine modification is found at Lys53. Residues Asn80, 179–183 (GGGGM), and Thr303 each bind pyridoxal 5'-phosphate.

Pyridoxal 5'-phosphate serves as cofactor.

The catalysed reaction is (3S)-3-hydroxy-D-aspartate = iminosuccinate + H2O. Functionally, catalyzes the dehydration of (2R,3S)-beta-hydroxyaspartate ((3S)-3-hydroxy-D-aspartate) into iminosuccinate. Is essential for the growth of P.denitrificans in the presence of glycolate and glyoxylate since it functions in glyoxylate assimilation via the beta-hydroxyaspartate cycle (BHAC). This Paracoccus denitrificans (strain Pd 1222) protein is beta-hydroxyaspartate dehydratase.